The chain runs to 220 residues: 26S proteasome non-ATPase regulatory subunit 9 (220 aa).

2 coiled-coil regions span residues 4 to 32 and 61 to 91; these read GTTTKERLERLINAKKQLEAQINRNGQIL and RLARQTIICLQNDHKELMNQIQTLLNQYHSE. Residues 102–200 form the PDZ domain; sequence RASALDLDSD…QLDLILVPKT (99 aa).

This sequence belongs to the proteasome subunit p27 family. In terms of assembly, interacts with PI31; this interaction is increased by PI31 ADP-ribosylation. Interacts with Rpt5.

In terms of biological role, acts as a chaperone during the assembly of the 26S proteasome, specifically of the base subcomplex of the PA700/19S regulatory complex (RC). This Drosophila melanogaster (Fruit fly) protein is 26S proteasome non-ATPase regulatory subunit 9.